A 342-amino-acid polypeptide reads, in one-letter code: S-adenosyl-L-methionine-dependent tRNA 4-demethylwyosine synthase (342 aa).

3 residues coordinate [2Fe-2S] cluster: C45, C58, and C71. Residues 64–312 (YGIHSHRCLQ…VKHLPGYHIE (249 aa)) enclose the Radical SAM core domain. [4Fe-4S] cluster contacts are provided by C81, C85, and C88.

It belongs to the TYW1 family. Monomer. The cofactor is [2Fe-2S] cluster. [4Fe-4S] cluster serves as cofactor.

It localises to the cytoplasm. It carries out the reaction N(1)-methylguanosine(37) in tRNA(Phe) + pyruvate + S-adenosyl-L-methionine = 4-demethylwyosine(37) in tRNA(Phe) + 5'-deoxyadenosine + L-methionine + CO2 + H2O. In terms of biological role, component of the wyosine derivatives biosynthesis pathway that catalyzes the condensation of N-methylguanine with 2 carbon atoms from pyruvate to form the tricyclic 4-demethylwyosine (imG-14) on guanosine-37 of tRNA(Phe). This Pyrococcus horikoshii (strain ATCC 700860 / DSM 12428 / JCM 9974 / NBRC 100139 / OT-3) protein is S-adenosyl-L-methionine-dependent tRNA 4-demethylwyosine synthase.